The following is a 1939-amino-acid chain: MSSDSEMAIFGEAAPFLRKSEKERIEAQNKPFDAKTSVFVVDPKESYVKAIVQSREGGKVTAKTEAGATVTVKEDQVFSMNPPKYDKIEDMAMMTHLHEPAVLYNLKERYAAWMIYTYSGLFCVTVNPYKWLPVYNPEVVTAYRGKKRQEAPPHIFSISDNAYQFMLTDRENQSILITGESGAGKTVNTKRVIQYFATIAVTGEKKKEEPASGKMQGTLEDQIISANPLLEAFGNAKTVRNDNSSRFGKFIRIHFGATGKLASADIETYLLEKSRVTFQLKAERSYHIFYQILSNKKPELIEMLLITTNPYDFAFVSQGEITVPSIDDQEELMATDSAVDILGFTADEKVAIYKLTGAVMHYGNMKFKQKQREEQAEPDGTEVADKAAYLTSLNSADLLKSLCYPRVKVGNEFVTKGQTVQQVYNAVGALAKAIYEKMFLWMVTRINQQLDTKQPRQYFIGVLDIAGFEIFDFNSLEQLCINFTNEKLQQFFNHHMFVLEQEEYKKEGIEWEFIDFGMDLAACIELIEKPMGIFSILEEECMFPKATDTSFKNKLYEQHLGKSNNFQKPKPAKGKPEAHFSLVHYAGTVDYNIAGWLDKNKDPLNETVVGLYQKSAMKTLAFLFSGAQTAEAEGGGGKKGGKKKGSSFQTVSALFRENLNKLMTNLRSTHPHFVRCIIPNETKTPGAMEHELVLHQLRCNGVLEGIRICRKGFPSRILYADFKQRYKVLNASAIPEGQFIDSKKASEKLLGSIEIDHTQYKFGHTKVFFKAGLLGTLEEMRDEKLAQLITRTQAICRGFLMRVEFRKMMERRESIFCIQYNIRAFMNVKHWPWMKLYFKIKPLLKSAETEKEMANMKEEFEKTKEELAKTEAKRKELEEKMVTLMQEKNDLQLQVQAEADALADAEERCDQLIKTKIQLEAKIKEVTERAEDEEEINAELTAKKRKLEDECSELKKDIDDLELTLAKVEKEKHATENKVKNLTEEMAGLDETIAKLTKEKKALQEAHQQTLDDLQMEEDKVNTLTKAKTKLEQQVDDLEGSLEQEKKLCMDLERAKRKLEGDLKLAQESTMDTENDKQQLNEKLKKKEFEMSNLQGKIEDEQALAIQLQKKIKELQARIEELEEEIEAERASRAKAEKQRSDLSRELEEISERLEEAGGATSAQIEMNKKREAEFQKMRRDLEESTLQHEATAAALRKKHADSVAELGEQIDSLQRVKQKLEKEKSELKMEINDLASNMETVSKAKANFEKMCRTLEDQLSEIKTKEEEQQRLINELSAQKARLHTESGEFSRQLDEKDAMVSQLSRGKQAFTQQIEELKRQLEEETKAKSTLAHALQSARHDCDLLREQYEEEQEAKAELQRGMSKANSEVAQWRTKYETDAIQRTEELEEAKKKLAQRLQDAEEHVEAVNSKCASLEKTKQRLQNEVEDLMIDVERSNAACIALDKKQRNFDKVLAEWKQKYEETQAELEASQKESRSLSTELFKVKNAYEESLDHLETLKRENKNLQQEISDLTEQIAEGGKHIHELEKVKKQLDHEKSELQTSLEEAEASLEHEEGKILRIQLELNQVKSEIDRKIAEKDEELDQLKRNHLRVVESMQSTLDAEIRSRNDALRIKKKMEGDLNEMEIQLNHANRQAAEALRNLRNTQGILKDTQLHLDDAIRGQDDLKEQLAMVERRANLMQAEVEELRASLERTERGRKMAEQELLDASERVQLLHTQNTSLINTKKKLETDISQIQGEMEDIVQEARNAEEKAKKAITDAAMMAEELKKEQDTSAHLERMKKNMEQTVKDLQLRLDEAEQLALKGGKKQIQKLEARVRELESEVESEQKHNVEAVKGLRKHERRVKELTYQTEEDRKNILRLQDLVDKLQTKVKAYKRQAEEAEEQSNVNLAKFRKLQHELEEAKERADIAESQVNKLRVKSREVHTKVISEE.

Residues 33–82 (DAKTSVFVVDPKESYVKAIVQSREGGKVTAKTEAGATVTVKEDQVFSMNP) enclose the Myosin N-terminal SH3-like domain. Phosphothreonine is present on residues Thr64 and Thr69. Ser79 is subject to Phosphoserine. Residues 86–782 (DKIEDMAMMT…LLGTLEEMRD (697 aa)) form the Myosin motor domain. Lys130 carries the N6,N6,N6-trimethyllysine modification. Residue 179–186 (GESGAGKT) coordinates ATP. Tyr389 is subject to Phosphotyrosine. At Thr391 the chain carries Phosphothreonine. Position 392 is a phosphoserine (Ser392). Thr419 is subject to Phosphothreonine. At Tyr424 the chain carries Phosphotyrosine. Ser625 bears the Phosphoserine mark. The tract at residues 659 to 681 (LNKLMTNLRSTHPHFVRCIIPNE) is actin-binding. A Pros-methylhistidine modification is found at His757. Residues 761–775 (KFGHTKVFFKAGLLG) form an actin-binding region. Residue Thr776 is modified to Phosphothreonine. The region spanning 785–814 (LAQLITRTQAICRGFLMRVEFRKMMERRES) is the IQ domain. Positions 843 to 1939 (LLKSAETEKE…EVHTKVISEE (1097 aa)) form a coiled coil. Phosphoserine occurs at positions 1092, 1162, and 1237. The residue at position 1241 (Thr1241) is a Phosphothreonine. At Ser1243 the chain carries Phosphoserine. At Thr1255 the chain carries Phosphothreonine. Position 1261 is a phosphoserine (Ser1261). Phosphothreonine is present on Thr1265. Residue Ser1278 is modified to Phosphoserine. Thr1286 is subject to Phosphothreonine. Residues Ser1288, Ser1292, Ser1303, Ser1306, and Ser1413 each carry the phosphoserine modification. A Phosphotyrosine modification is found at Tyr1464. Phosphothreonine is present on Thr1467. Phosphoserine is present on Ser1474. A Phosphotyrosine modification is found at Tyr1492. Ser1495 bears the Phosphoserine mark. Thr1501 carries the post-translational modification Phosphothreonine. Ser1514 is subject to Phosphoserine. Thr1517 carries the phosphothreonine modification. Phosphoserine occurs at positions 1542, 1547, 1554, 1574, 1600, 1603, 1714, and 1726. Thr1730 and Thr1736 each carry phosphothreonine. Ser1739 is subject to Phosphoserine.

It belongs to the TRAFAC class myosin-kinesin ATPase superfamily. Myosin family. In terms of assembly, muscle myosin is a hexameric protein that consists of 2 heavy chain subunits (MHC), 2 alkali light chain subunits (MLC) and 2 regulatory light chain subunits (MLC-2).

It localises to the cytoplasm. It is found in the myofibril. In terms of biological role, muscle contraction. The polypeptide is Myosin-4 (MYH4) (Homo sapiens (Human)).